The following is a 496-amino-acid chain: Endoglucanase (496 aa).

An N-terminal signal peptide occupies residues 1-23; the sequence is MGYHSVFIAVFLWSSMVCHNGLA. D93 functions as the Nucleophile in the catalytic mechanism. Residues H415, D467, and E476 contribute to the active site.

This sequence belongs to the glycosyl hydrolase 9 (cellulase E) family.

It catalyses the reaction Endohydrolysis of (1-&gt;4)-beta-D-glucosidic linkages in cellulose, lichenin and cereal beta-D-glucans.. Functionally, involved in ripening fruit process. The protein is Endoglucanase of Phaseolus vulgaris (Kidney bean).